We begin with the raw amino-acid sequence, 74 residues long: Homeobox protein H40 (74 aa).

A DNA-binding region (homeobox) is located at residues 8–67 (ARRARTAFTYEQLVALENKFKTTRYLSVCERLNLALSLSLTETQVKIWFQNRRTKWKKQN).

The protein resides in the nucleus. The sequence is that of Homeobox protein H40 from Apis mellifera (Honeybee).